The primary structure comprises 102 residues: Large ribosomal subunit protein bL21 (102 aa).

This sequence belongs to the bacterial ribosomal protein bL21 family. In terms of assembly, part of the 50S ribosomal subunit. Contacts protein L20.

This protein binds to 23S rRNA in the presence of protein L20. This chain is Large ribosomal subunit protein bL21, found in Ligilactobacillus salivarius (strain UCC118) (Lactobacillus salivarius).